The sequence spans 204 residues: Pyrrolidone-carboxylate peptidase (204 aa).

Residues glutamate 80, cysteine 142, and histidine 165 contribute to the active site.

Belongs to the peptidase C15 family. In terms of assembly, homotetramer.

Its subcellular location is the cytoplasm. It catalyses the reaction Release of an N-terminal pyroglutamyl group from a polypeptide, the second amino acid generally not being Pro.. In terms of biological role, removes 5-oxoproline from various penultimate amino acid residues except L-proline. The protein is Pyrrolidone-carboxylate peptidase of Lysinibacillus sphaericus (strain C3-41).